The following is a 476-amino-acid chain: Glucose-1-phosphate adenylyltransferase (476 aa).

Residues Y114, G179, 194–195, and S212 each bind alpha-D-glucose 1-phosphate; that span reads EK.

This sequence belongs to the bacterial/plant glucose-1-phosphate adenylyltransferase family. As to quaternary structure, homotetramer.

It carries out the reaction alpha-D-glucose 1-phosphate + ATP + H(+) = ADP-alpha-D-glucose + diphosphate. It functions in the pathway glycan biosynthesis; glycogen biosynthesis. In terms of biological role, involved in the biosynthesis of ADP-glucose, a building block required for the elongation reactions to produce glycogen. Catalyzes the reaction between ATP and alpha-D-glucose 1-phosphate (G1P) to produce pyrophosphate and ADP-Glc. The sequence is that of Glucose-1-phosphate adenylyltransferase from Yersinia pestis bv. Antiqua (strain Antiqua).